A 183-amino-acid polypeptide reads, in one-letter code: Adenine phosphoribosyltransferase (183 aa).

This sequence belongs to the purine/pyrimidine phosphoribosyltransferase family. As to quaternary structure, homodimer.

It is found in the cytoplasm. It catalyses the reaction AMP + diphosphate = 5-phospho-alpha-D-ribose 1-diphosphate + adenine. It functions in the pathway purine metabolism; AMP biosynthesis via salvage pathway; AMP from adenine: step 1/1. Its function is as follows. Catalyzes a salvage reaction resulting in the formation of AMP, that is energically less costly than de novo synthesis. The polypeptide is Adenine phosphoribosyltransferase (Salmonella paratyphi C (strain RKS4594)).